Reading from the N-terminus, the 523-residue chain is Putative glucosylceramidase 1 (523 aa).

The N-terminal stretch at 1–23 (MKSRFLLKIFIFLAVFGVDSVRA) is a signal peptide. Residue asparagine 168 is glycosylated (N-linked (GlcNAc...) asparagine). Catalysis depends on glutamate 358, which acts as the Nucleophile.

This sequence belongs to the glycosyl hydrolase 30 family.

The enzyme catalyses a beta-D-glucosylceramide + H2O = an N-acyl-sphingoid base + D-glucose. The catalysed reaction is a beta-D-glucosyl-(1&lt;-&gt;1')-N-acylsphing-4-enine + H2O = an N-acylsphing-4-enine + D-glucose. It catalyses the reaction an N-acyl-1-beta-D-glucosyl-15-methylhexadecasphing-4-enine + H2O = an N-acyl-15-methylhexadecasphing-4-enine + D-glucose. The protein operates within lipid metabolism; sphingolipid metabolism. In terms of biological role, glucosylceramidase that catalyzes the hydrolysis of glucosylceramides into free ceramides and glucose. C.elegans contains specific sphingoid bases, which are unique or different in structure compared to the sphingoid bases found in other animals. Two examples of these distinctive compounds are: 15-methylhexadecasphinganine and 15-methylhexadecasphing-4-enine. The polypeptide is Putative glucosylceramidase 1 (gba-1) (Caenorhabditis elegans).